The primary structure comprises 200 residues: ATP-dependent Clp protease proteolytic subunit 3 (200 aa).

Serine 101 serves as the catalytic Nucleophile. Histidine 126 is an active-site residue.

The protein belongs to the peptidase S14 family. Fourteen ClpP subunits assemble into 2 heptameric rings which stack back to back to give a disk-like structure with a central cavity, resembling the structure of eukaryotic proteasomes.

Its subcellular location is the cytoplasm. It carries out the reaction Hydrolysis of proteins to small peptides in the presence of ATP and magnesium. alpha-casein is the usual test substrate. In the absence of ATP, only oligopeptides shorter than five residues are hydrolyzed (such as succinyl-Leu-Tyr-|-NHMec, and Leu-Tyr-Leu-|-Tyr-Trp, in which cleavage of the -Tyr-|-Leu- and -Tyr-|-Trp bonds also occurs).. Its function is as follows. Cleaves peptides in various proteins in a process that requires ATP hydrolysis. Has a chymotrypsin-like activity. Plays a major role in the degradation of misfolded proteins. The protein is ATP-dependent Clp protease proteolytic subunit 3 of Parasynechococcus marenigrum (strain WH8102).